Consider the following 692-residue polypeptide: Elongation factor G (692 aa).

The region spanning 8–282 (DKTRNIGIMA…AVLDYLPAPT (275 aa)) is the tr-type G domain. GTP is bound by residues 17 to 24 (AHIDAGKT), 81 to 85 (DTPGH), and 135 to 138 (NKMD).

The protein belongs to the TRAFAC class translation factor GTPase superfamily. Classic translation factor GTPase family. EF-G/EF-2 subfamily.

The protein localises to the cytoplasm. Functionally, catalyzes the GTP-dependent ribosomal translocation step during translation elongation. During this step, the ribosome changes from the pre-translocational (PRE) to the post-translocational (POST) state as the newly formed A-site-bound peptidyl-tRNA and P-site-bound deacylated tRNA move to the P and E sites, respectively. Catalyzes the coordinated movement of the two tRNA molecules, the mRNA and conformational changes in the ribosome. This chain is Elongation factor G, found in Bacillus pumilus (strain SAFR-032).